We begin with the raw amino-acid sequence, 197 residues long: MTAITITDAAHDYLADLLEKQNTPGIGIRVFITQPGTQYAETCIAYCKPGEEKPEDKAIGLKSFTAWIDGFSEAFLDDAVVDYATDRMGGQLTIKAPNAKVPMVNADSPINERINYYLQTEINPGLASHGGQVTLIDVVEEEAKNIAVLQFGGGCQGCGQADVTLKEGIERTLLERIPELSGVRDVTDHTQKENAYY.

Residues Cys-155 and Cys-158 each coordinate [4Fe-4S] cluster.

The protein belongs to the NfuA family. As to quaternary structure, homodimer. It depends on [4Fe-4S] cluster as a cofactor.

Involved in iron-sulfur cluster biogenesis. Binds a 4Fe-4S cluster, can transfer this cluster to apoproteins, and thereby intervenes in the maturation of Fe/S proteins. Could also act as a scaffold/chaperone for damaged Fe/S proteins. The chain is Fe/S biogenesis protein NfuA from Pseudomonas savastanoi pv. phaseolicola (strain 1448A / Race 6) (Pseudomonas syringae pv. phaseolicola (strain 1448A / Race 6)).